We begin with the raw amino-acid sequence, 588 residues long: Polyphenol oxidase II, chloroplastic (588 aa).

The segment covering 1 to 10 (MASFTTSPCT) has biased composition (polar residues). A disordered region spans residues 1-32 (MASFTTSPCTSAAPKTPKSLSSSATISSPLPK). The transit peptide at 1 to 50 (MASFTTSPCTSAAPKTPKSLSSSATISSPLPKPSQIHIATAKRTHHFKVS) directs the protein to the chloroplast. A compositionally biased stretch (low complexity) spans 16-29 (TPKSLSSSATISSP). A thylakoid-targeting transit peptide spans 51-88 (CNAPNGDSQPKLDRRDVLLGLGGLAGAASLINNPLAFA). 2 disulfides stabilise this stretch: C99-C116 and C115-C179. 6 residues coordinate Cu cation: H178, H199, H208, H330, H334, and H366. The segment at residues 182 to 199 (CNGGYVQTDYPDKEIQVH) is a cross-link (2'-(S-cysteinyl)-histidine (Cys-His)).

Belongs to the tyrosinase family. As to quaternary structure, monomer. The cofactor is Cu(2+).

Its subcellular location is the plastid. The protein resides in the chloroplast thylakoid lumen. The enzyme catalyses 2 catechol + O2 = 2 1,2-benzoquinone + 2 H2O. In terms of biological role, catalyzes the oxidation of mono- and o-diphenols to o-diquinones. The chain is Polyphenol oxidase II, chloroplastic (co-2) from Ipomoea batatas (Sweet potato).